A 551-amino-acid chain; its full sequence is Cleavage and polyadenylation specificity factor subunit 6 (551 aa).

Positions methionine 1–glycine 213 are necessary for interaction with NXF1. In terms of domain architecture, RRM spans isoleucine 81–lysine 161. Positions isoleucine 81–lysine 161 are necessary for interaction with NUDT21/CPSF5. The interval isoleucine 81 to lysine 161 is necessary for nuclear paraspeckles localization. Threonine 157 bears the Phosphothreonine mark. Polar residues predominate over residues methionine 169–methionine 180. Disordered regions lie at residues methionine 169 to glutamate 411 and leucine 477 to arginine 551. Residues arginine 202–arginine 206 carry the GAR motif. The segment covering phenylalanine 207–glycine 219 has biased composition (low complexity). Pro residues-rich tracts occupy residues proline 220–glycine 265, glycine 285–threonine 366, and glycine 377–proline 388. Residues proline 389 to threonine 404 are compositionally biased toward basic and acidic residues. Phosphothreonine occurs at positions 404 and 407. The tract at residues threonine 404–arginine 551 is sufficient for nuclear speckle localization. Positions alanine 405 to arginine 551 are necessary for RNA-binding. Residues glutamate 481–arginine 551 are necessary for interaction with SRSF3, SRSF7 and TRA2B/SFRS10. Residues serine 489–arginine 503 are compositionally biased toward basic and acidic residues. The tract at residues arginine 490–arginine 551 is arg/Ser-rich domain. A phosphoserine mark is found at serine 494, serine 500, serine 511, serine 513, and serine 525. Residues glutamate 504 to arginine 514 show a composition bias toward basic residues. Residues lysine 510–arginine 551 are sufficient for nuclear targeting. A compositionally biased stretch (basic and acidic residues) spans aspartate 515–arginine 551.

Belongs to the RRM CPSF6/7 family. Component of the cleavage factor Im (CFIm) complex which is a heterotetramer composed of two subunits of NUDT21/CPSF5 and two subunits of CPSF6 or CPSF7 or a heterodimer of CPSF6 and CPSF7. The cleavage factor Im (CFIm) complex associates with the CPSF and CSTF complexes to promote the assembly of the core mRNA 3'-processing machinery. Associates with the exon junction complex (EJC). Associates with the 80S ribosome particle. Interacts (via the RRM domain) with NUDT21/CPSF5; this interaction is direct and enhances binding to RNA. Interacts (via Arg/Ser-rich domain) with FIP1L1 (preferentially via unphosphorylated form and Arg/Glu/Asp-rich domain); this interaction mediates, at least in part, the interaction between the CFIm and CPSF complexes and may be inhibited by CPSF6 hyper-phosphorylation. Interacts (via N-terminus) with NXF1; this interaction is direct. Interacts with SRSF3. Interacts with SRSF7. Interacts with SNRNP70. Interacts with TRA2B/SFRS10. Interacts with UPF1. Interacts with UPF3B. Interacts with VIRMA. Interacts (via Arg/Ser-rich domain) with TNPO3; promoting nuclear import of CPSF6 independently of its phosphorylation status. Interacts with YTHDC1. Phosphorylated. Phosphorylated in the Arg/Ser-rich domain by SRPK1, in vitro. Post-translationally, symmetrically dimethylated on arginine residues in the GAR motif by PRMT5 in a WDR77- and CLNS1A-dependent manner. Asymmetrically dimethylated on arginine residues in the GAR motif by PRMT1.

It is found in the nucleus. Its subcellular location is the nucleoplasm. The protein localises to the nucleus speckle. The protein resides in the cytoplasm. Its function is as follows. Component of the cleavage factor Im (CFIm) complex that functions as an activator of the pre-mRNA 3'-end cleavage and polyadenylation processing required for the maturation of pre-mRNA into functional mRNAs. CFIm contributes to the recruitment of multiprotein complexes on specific sequences on the pre-mRNA 3'-end, so called cleavage and polyadenylation signals (pA signals). Most pre-mRNAs contain multiple pA signals, resulting in alternative cleavage and polyadenylation (APA) producing mRNAs with variable 3'-end formation. The CFIm complex acts as a key regulator of cleavage and polyadenylation site choice during APA through its binding to 5'-UGUA-3' elements localized in the 3'-untranslated region (UTR) for a huge number of pre-mRNAs. CPSF6 enhances NUDT21/CPSF5 binding to 5'-UGUA-3' elements localized upstream of pA signals and promotes RNA looping, and hence activates directly the mRNA 3'-processing machinery. Plays a role in mRNA export. The sequence is that of Cleavage and polyadenylation specificity factor subunit 6 from Bos taurus (Bovine).